Here is a 1940-residue protein sequence, read N- to C-terminus: Rho GTPase-activating protein 32 (1940 aa).

A PX; atypical domain is found at 154 to 248 (SKELVFLVQI…LTWMEIDNKG (95 aa)). Residues 262–324 (PAIAAAHVIK…PSECVELIND (63 aa)) form the SH3 domain. The Rho-GAP domain occupies 375–570 (CDLGEHLLNS…FILNHVEVLF (196 aa)). Disordered stretches follow at residues 646-746 (FPSE…LSAS), 1035-1163 (RANQ…FSVT), 1219-1264 (FTTG…PPVR), 1430-1454 (KHPRSRNKPDYMPSMSPGVRSYTED), and 1675-1786 (RSRS…HSSA). A compositionally biased stretch (polar residues) spans 1047 to 1061 (PQGASASESPQELSH). 2 stretches are compositionally biased toward low complexity: residues 1081 to 1094 (LALALAESAQQASA) and 1145 to 1163 (SRKTSPATPPSTTSSFSVT). The segment covering 1691 to 1707 (ETKDVRYPGRTEGDERT) has biased composition (basic and acidic residues). A compositionally biased stretch (polar residues) spans 1725–1734 (PQKQSGSSRS). A compositionally biased stretch (basic and acidic residues) spans 1736 to 1755 (MQHDISTEQHSQDTLHRQPS).

The protein belongs to the PX domain-containing GAP family.

The protein resides in the cytoplasm. It localises to the membrane. Its subcellular location is the cell membrane. GTPase-activating protein (GAP) promoting GTP hydrolysis on RHOA, CDC42 and RAC1 small GTPases. This is Rho GTPase-activating protein 32 (arhgap32) from Xenopus laevis (African clawed frog).